A 322-amino-acid chain; its full sequence is 4-hydroxythreonine-4-phosphate dehydrogenase (322 aa).

Threonine 132 serves as a coordination point for substrate. Residues histidine 160, histidine 205, and histidine 260 each coordinate a divalent metal cation. The substrate site is built by lysine 268, asparagine 277, and arginine 286.

Belongs to the PdxA family. As to quaternary structure, homodimer. Zn(2+) serves as cofactor. Mg(2+) is required as a cofactor. Requires Co(2+) as cofactor.

The protein localises to the cytoplasm. The catalysed reaction is 4-(phosphooxy)-L-threonine + NAD(+) = 3-amino-2-oxopropyl phosphate + CO2 + NADH. Its pathway is cofactor biosynthesis; pyridoxine 5'-phosphate biosynthesis; pyridoxine 5'-phosphate from D-erythrose 4-phosphate: step 4/5. In terms of biological role, catalyzes the NAD(P)-dependent oxidation of 4-(phosphooxy)-L-threonine (HTP) into 2-amino-3-oxo-4-(phosphooxy)butyric acid which spontaneously decarboxylates to form 3-amino-2-oxopropyl phosphate (AHAP). This is 4-hydroxythreonine-4-phosphate dehydrogenase from Xanthomonas oryzae pv. oryzae (strain PXO99A).